We begin with the raw amino-acid sequence, 414 residues long: MAEKLKLARSMSLFEEAKQLVPGGVAGIRRPYNFVPGEYPIFFDHGKGGRVVDVDGNEYIDFLCAYGPIIIGYREDEIDDAVINQIKNKGFCFSLTQEMQNTLVKKLRELIPCCEMAALVKTGSDATTIAIRVARGYTGKTKIARYGYHGWHDWCVEVKGGIPPKLYEDIYEFHYNDLDSLKAILEANKDDMAGIIITPIGHPNGAEVQMPKPGYLEAVRELANQYHCLLIFDEIRSGFRCSLGGAQKLFGVTPDLSTFGKAMANGYAIAALVGKEEYMQVLADKVFLSSTFFPNSDGIVAAIKTIEILERDRILDVVAAKGRKFGAEVEKVVEESGVPVNFTGAPWMPYITFKKDEAGLYKKLRTEYYTQLIRHNVFMQPYHHGYICYRHTDEDLAYTVEAIRESLAEVKKML.

Lys261 is subject to N6-(pyridoxal phosphate)lysine.

The protein belongs to the class-III pyridoxal-phosphate-dependent aminotransferase family. In terms of assembly, homodimer. Requires pyridoxal 5'-phosphate as cofactor.

It carries out the reaction (3S)-3-aminobutanoyl-CoA + 2-oxoglutarate = acetoacetyl-CoA + L-glutamate. Its pathway is amino-acid degradation; L-lysine degradation via acetate pathway. Its function is as follows. 3-aminobutyryl-CoA aminotransferase that acts specifically on coenzyme A (CoA) esters and catalyzes the conversion of 3-aminobutyryl-CoA into acetoacetyl-CoA in an alternative pathway of lysine fermentation. The sequence is that of 3-aminobutyryl-CoA aminotransferase (kat) from Cloacimonas acidaminovorans (strain Evry).